The following is a 212-amino-acid chain: Deoxyribose-phosphate aldolase (212 aa).

D89 functions as the Proton donor/acceptor in the catalytic mechanism. K151 functions as the Schiff-base intermediate with acetaldehyde in the catalytic mechanism. K180 acts as the Proton donor/acceptor in catalysis.

The protein belongs to the DeoC/FbaB aldolase family. DeoC type 1 subfamily.

The protein resides in the cytoplasm. The enzyme catalyses 2-deoxy-D-ribose 5-phosphate = D-glyceraldehyde 3-phosphate + acetaldehyde. Its pathway is carbohydrate degradation; 2-deoxy-D-ribose 1-phosphate degradation; D-glyceraldehyde 3-phosphate and acetaldehyde from 2-deoxy-alpha-D-ribose 1-phosphate: step 2/2. Functionally, catalyzes a reversible aldol reaction between acetaldehyde and D-glyceraldehyde 3-phosphate to generate 2-deoxy-D-ribose 5-phosphate. The sequence is that of Deoxyribose-phosphate aldolase from Clostridium botulinum (strain 657 / Type Ba4).